The primary structure comprises 992 residues: GATOR2 complex protein WDR59 (992 aa).

WD repeat units follow at residues 57-98 (QSKW…GEVG), 103-143 (GHTR…KPTV), 146-185 (SAVA…TAVE), 189-229 (AHLS…KYLN), 232-276 (PCQV…APVH), 278-318 (FVGH…RVDY), and 319-362 (QMQR…SLSH). The interval 343–373 (PEPEKTPHPQDIDHQPSLSHGEEDAIKEDPP) is disordered. Positions 344 to 373 (EPEKTPHPQDIDHQPSLSHGEEDAIKEDPP) are enriched in basic and acidic residues. An RWD domain is found at 393-494 (QEFSLINVQI…RQLVSCLESF (102 aa)). Serine 564 is modified (phosphoserine). The stretch at 660–706 (KSLGELYILNVNDTQETCQKNATSAMLVGRKDLVQVWSLATVATDLC) is one WD 8 repeat. Phosphoserine occurs at positions 839, 840, and 848. The disordered stretch occupies residues 849 to 870 (LTYSDPRERERDQHDKNKRLLD). A compositionally biased stretch (basic and acidic residues) spans 853–869 (DPRERERDQHDKNKRLL). The segment at 919–939 (YCSHCRSEVRGTQCAICKGFT) adopts a C4-type zinc-finger fold. Zn(2+) contacts are provided by cysteine 920, cysteine 923, cysteine 932, cysteine 935, cysteine 945, cysteine 956, histidine 961, histidine 964, histidine 967, cysteine 978, cysteine 982, cysteine 984, and cysteine 986. The segment at 940–989 (FQCAICHVAVRGSSNFCLTCGHGGHTSHMMEWFRTQEVCPTGCGCHCLLE) adopts an RING-type; atypical zinc-finger fold.

It belongs to the WD repeat WDR59 family. In terms of assembly, component of the GATOR2 subcomplex, composed of MIOS, SEC13, SEH1L, WDR24 and WDR59. The GATOR2 complex interacts with CASTOR1 and CASTOR2; the interaction is negatively regulated by arginine. The GATOR2 complex interacts with SESN1, SESN2 and SESN3; the interaction is negatively regulated by amino acids. Interacts with DDB1-CUL4A/B E3 ligase complexes.

The protein localises to the lysosome membrane. Its activity is regulated as follows. The GATOR2 complex is negatively regulated by the upstream amino acid sensors CASTOR1 and SESN2, which sequester the GATOR2 complex in absence of amino acids. In the presence of abundant amino acids, GATOR2 is released from CASTOR1 and SESN2 and activated. Functionally, as a component of the GATOR2 complex, functions as an activator of the amino acid-sensing branch of the mTORC1 signaling pathway. The GATOR2 complex indirectly activates mTORC1 through the inhibition of the GATOR1 subcomplex. GATOR2 probably acts as an E3 ubiquitin-protein ligase toward GATOR1. In the presence of abundant amino acids, the GATOR2 complex mediates ubiquitination of the NPRL2 core component of the GATOR1 complex, leading to GATOR1 inactivation. In the absence of amino acids, GATOR2 is inhibited, activating the GATOR1 complex. This Mus musculus (Mouse) protein is GATOR2 complex protein WDR59.